The following is a 369-amino-acid chain: Cellular tumor antigen p53 (369 aa).

The interval 1-28 (MAESQEFAELWERNLISTQEAGTCWELI) is transcription activation (acidic). A DNA-binding region spans residues 66-256 (DYPGEHGFKL…KTEESNFRKD (191 aa)). Residues Cys-140, His-143, Cys-202, and Cys-206 each contribute to the Zn(2+) site. The interval 237-244 (RVCACPGR) is interaction with DNA. Over residues 246–263 (RKTEESNFRKDQETKTLD) the composition is skewed to basic and acidic residues. 2 disordered regions span residues 246-296 (RKTE…SGSS) and 318-369 (NDSL…SDSD). Polar residues predominate over residues 269–281 (NKRSLTKDSTSSV). The Bipartite nuclear localization signal signature appears at 270–289 (KRSLTKDSTSSVPRPEGSKK). Residues 298-329 (EEIYTLQVRGKERYEMLKKINDSLELSDVVPP) are oligomerization. Residues 312–323 (EMLKKINDSLEL) carry the Nuclear export signal motif. The interval 342-365 (KGKKKDGQTPEPKRGKKLMVKDEK) is basic (repression of DNA-binding). A compositionally biased stretch (basic and acidic residues) spans 346–369 (KDGQTPEPKRGKKLMVKDEKSDSD).

The protein belongs to the p53 family. As to quaternary structure, binds DNA as a homotetramer. Requires Zn(2+) as cofactor.

The protein resides in the cytoplasm. Its subcellular location is the nucleus. Multifunctional transcription factor that induces cell cycle arrest, DNA repair or apoptosis upon binding to its target DNA sequence. Acts as a tumor suppressor in many tumor types; induces growth arrest or apoptosis depending on the physiological circumstances and cell type. Negatively regulates cell division by controlling expression of a set of genes required for this process. One of the activated genes is an inhibitor of cyclin-dependent kinases. Apoptosis induction seems to be mediated either by stimulation of BAX and FAS antigen expression, or by repression of Bcl-2 expression. The polypeptide is Cellular tumor antigen p53 (tp53) (Barbus barbus (Barbel)).